We begin with the raw amino-acid sequence, 368 residues long: Heme A synthase (368 aa).

5 helical membrane passes run 14 to 34 (AVRI…LVGG), 104 to 124 (VIGI…AIGP), 129 to 149 (ALWI…WMVA), 161 to 181 (VRLA…VWTL), and 200 to 220 (ALAL…VAGL). His-264 provides a ligand contact to heme. The next 3 membrane-spanning stretches (helical) occupy residues 266–283 (MLAY…IDAL), 296–316 (FLAL…AAPI), and 318–338 (LALV…LQAE). Residue His-322 coordinates heme.

The protein belongs to the COX15/CtaA family. Type 2 subfamily. Interacts with CtaB. The cofactor is heme b.

The protein localises to the cell membrane. The catalysed reaction is Fe(II)-heme o + 2 A + H2O = Fe(II)-heme a + 2 AH2. It participates in porphyrin-containing compound metabolism; heme A biosynthesis; heme A from heme O: step 1/1. Its function is as follows. Catalyzes the conversion of heme O to heme A by two successive hydroxylations of the methyl group at C8. The first hydroxylation forms heme I, the second hydroxylation results in an unstable dihydroxymethyl group, which spontaneously dehydrates, resulting in the formyl group of heme A. In Rhodopseudomonas palustris (strain ATCC BAA-98 / CGA009), this protein is Heme A synthase.